The chain runs to 269 residues: Ribosomal RNA small subunit methyltransferase J (269 aa).

S-adenosyl-L-methionine contacts are provided by residues 124 to 125 (ER) and Asp188.

It belongs to the methyltransferase superfamily. RsmJ family.

It localises to the cytoplasm. The catalysed reaction is guanosine(1516) in 16S rRNA + S-adenosyl-L-methionine = N(2)-methylguanosine(1516) in 16S rRNA + S-adenosyl-L-homocysteine + H(+). In terms of biological role, specifically methylates the guanosine in position 1516 of 16S rRNA. The chain is Ribosomal RNA small subunit methyltransferase J from Saccharophagus degradans (strain 2-40 / ATCC 43961 / DSM 17024).